A 423-amino-acid polypeptide reads, in one-letter code: 3-phosphoshikimate 1-carboxyvinyltransferase (423 aa).

Residues Lys21, Ser22, and Arg26 each coordinate 3-phosphoshikimate. Position 21 (Lys21) interacts with phosphoenolpyruvate. Phosphoenolpyruvate is bound by residues Gly93 and Arg123. 3-phosphoshikimate is bound by residues Ser168, Ser169, Gln170, Ser196, Asp311, and Lys338. Gln170 provides a ligand contact to phosphoenolpyruvate. The Proton acceptor role is filled by Asp311. Residues Arg342, Arg383, and Lys408 each coordinate phosphoenolpyruvate.

The protein belongs to the EPSP synthase family. In terms of assembly, monomer.

It localises to the cytoplasm. It carries out the reaction 3-phosphoshikimate + phosphoenolpyruvate = 5-O-(1-carboxyvinyl)-3-phosphoshikimate + phosphate. The protein operates within metabolic intermediate biosynthesis; chorismate biosynthesis. Functionally, catalyzes the transfer of the enolpyruvyl moiety of phosphoenolpyruvate (PEP) to the 5-hydroxyl of shikimate-3-phosphate (S3P) to produce enolpyruvyl shikimate-3-phosphate and inorganic phosphate. In Methanosphaerula palustris (strain ATCC BAA-1556 / DSM 19958 / E1-9c), this protein is 3-phosphoshikimate 1-carboxyvinyltransferase.